A 505-amino-acid polypeptide reads, in one-letter code: Kinesin light chain 3 (505 aa).

The segment at 1–20 is disordered; sequence MSVQVAAPGSTGLGPERLNP. Residues 90–150 are a coiled coil; the sequence is ALSAHVGVLE…EEEKSHLQFL (61 aa). The tract at residues 154-197 is disordered; that stretch reads RQYDPPEESQRPDSPPRRDSLASLFPSEEEEKKGPEAAGAAAAQ. Over residues 161–173 the composition is skewed to basic and acidic residues; it reads ESQRPDSPPRRDS. At Ser173 the chain carries Phosphoserine. TPR repeat units follow at residues 207 to 240, 249 to 282, 291 to 324, 333 to 366, and 375 to 408; these read LRTL…LERS, ATML…REQT, AATL…REKV, AKQL…YEAL, and AKTK…EALP. Residues 409–439 are disordered; the sequence is APLGAPQGGTAGEAQQQVLRRSSSFSKLRES. Polar residues predominate over residues 421-434; sequence EAQQQVLRRSSSFS. Ser467 carries the post-translational modification Phosphoserine. Positions 486 to 505 are disordered; that stretch reads QHLNEASRTLSASTQDLSPR. Position 499 is a phosphothreonine (Thr499). Ser503 carries the phosphoserine modification.

Belongs to the kinesin light chain family. In terms of assembly, oligomer composed of two heavy chains and two light chains. Associates with microtubulin in an ATP-dependent manner. Interacts with KIF5C. Interacts with ODF1. Interacts with LRGUK. Interacts with VDAC2. Expressed in postmeiotic male germ cells (at protein level).

Its subcellular location is the cytoplasm. The protein localises to the cytoskeleton. The protein resides in the mitochondrion. In terms of biological role, kinesin is a microtubule-associated force-producing protein that may play a role in organelle transport. Plays a role during spermiogenesis in the development of the sperm tail midpiece and in the normal function of spermatozoa. May play a role in the formation of the mitochondrial sheath formation in the developing spermatid midpiece. This Rattus norvegicus (Rat) protein is Kinesin light chain 3 (Klc3).